Reading from the N-terminus, the 49-residue chain is Large ribosomal subunit protein bL33D (49 aa).

The protein belongs to the bacterial ribosomal protein bL33 family.

The chain is Large ribosomal subunit protein bL33D (rpmG4) from Enterococcus faecalis (strain ATCC 700802 / V583).